The following is a 440-amino-acid chain: Cell division protein DivIB (440 aa).

Over residues 1 to 10 the composition is skewed to basic and acidic residues; sequence MMDDKTKNDQ. Disordered stretches follow at residues 1 to 97 and 123 to 154; these read MMDD…DSNI and QHQSAPNEQNSDSNDEETVTKKERKSKVTQLK. At 1 to 174 the chain is on the cytoplasmic side; the sequence is MMDDKTKNDQ…RRKRQKRIQY (174 aa). Positions 12 to 21 are enriched in acidic residues; that stretch reads ESNEDKDELE. Positions 27–39 are enriched in basic residues; the sequence is TSKKRRQRKRSKA. The segment covering 78–87 has biased composition (low complexity); that stretch reads DSASSHANDN. The span at 88 to 97 shows a compositional bias: acidic residues; it reads NIDDSTDSNI. A compositionally biased stretch (polar residues) spans 124–134; it reads HQSAPNEQNSD. Residues 175 to 195 traverse the membrane as a helical segment; sequence SVITILVLLIAVILIYMFSPL. The POTRA domain occupies 196–264; sequence SKIAHVNING…NTLNVDITEN (69 aa). Residues 196–440 lie on the Extracellular side of the membrane; that stretch reads SKIAHVNING…KINKQSSKNN (245 aa). Residues 397-440 are disordered; that stretch reads YRGNTSTQSESDKNVTKSSQEENQAKEELQSVLNKINKQSSKNN. Positions 406 to 425 are enriched in basic and acidic residues; sequence ESDKNVTKSSQEENQAKEEL. The segment covering 427-440 has biased composition (polar residues); the sequence is SVLNKINKQSSKNN.

The protein belongs to the FtsQ/DivIB family. DivIB subfamily.

The protein localises to the cell membrane. Its function is as follows. Cell division protein that may be involved in stabilizing or promoting the assembly of the division complex. The chain is Cell division protein DivIB from Staphylococcus aureus (strain MRSA252).